We begin with the raw amino-acid sequence, 145 residues long: D-aminoacyl-tRNA deacylase (145 aa).

The Gly-cisPro motif, important for rejection of L-amino acids signature appears at Gly-137–Pro-138.

The protein belongs to the DTD family. As to quaternary structure, homodimer.

The protein resides in the cytoplasm. The catalysed reaction is glycyl-tRNA(Ala) + H2O = tRNA(Ala) + glycine + H(+). It carries out the reaction a D-aminoacyl-tRNA + H2O = a tRNA + a D-alpha-amino acid + H(+). Functionally, an aminoacyl-tRNA editing enzyme that deacylates mischarged D-aminoacyl-tRNAs. Also deacylates mischarged glycyl-tRNA(Ala), protecting cells against glycine mischarging by AlaRS. Acts via tRNA-based rather than protein-based catalysis; rejects L-amino acids rather than detecting D-amino acids in the active site. By recycling D-aminoacyl-tRNA to D-amino acids and free tRNA molecules, this enzyme counteracts the toxicity associated with the formation of D-aminoacyl-tRNA entities in vivo and helps enforce protein L-homochirality. This Cronobacter sakazakii (strain ATCC BAA-894) (Enterobacter sakazakii) protein is D-aminoacyl-tRNA deacylase.